A 366-amino-acid chain; its full sequence is MKKVKLSLIANERSRKTSFIKRKDGIFKKLHELSTLCGVQACALIYSPFIPVPESWPSREGAKKVASRFLEMPPTARTKKMMDQETYLMERITKAKEQLKNLAAENRELQVRRFMFDCVEGKMSQYHYDAKDLQDLQSCINLYLDQLNGRIESIKENGESLLSSVSPFPTRIGVDEIGDESFSDSPIHATTGVVDTLNATNPHVLTGDMTPFLDADATAVTASSRFFDHIPYENMNMSQNLHEPFQHLVPTNVCDFFQNQNMNQVQYQAPNNLFNQIQREFYNINLNLNLNLNSNQYLNQQQSFMNPMVEQHMNHVGGRESIPFVDGNCYNYHQLPSNQLPAVDHASTSYMPSTTGVYDPYINNNL.

Positions 1 to 59 constitute an MADS-box domain; that stretch reads MKKVKLSLIANERSRKTSFIKRKDGIFKKLHELSTLCGVQACALIYSPFIPVPESWPSR. Positions 86 to 115 form a coiled coil; sequence TYLMERITKAKEQLKNLAAENRELQVRRFM.

In terms of assembly, interacts with AGL62.

It is found in the nucleus. Its function is as follows. Probable transcription factor. The protein is Agamous-like MADS-box protein AGL36 (AGL36) of Arabidopsis thaliana (Mouse-ear cress).